A 225-amino-acid polypeptide reads, in one-letter code: Ribose-5-phosphate isomerase A (225 aa).

Residues 27–30 (SGST), 80–83 (DGAD), and 93–96 (KGGG) each bind substrate. The active-site Proton acceptor is the Glu102. Lys120 is a substrate binding site.

It belongs to the ribose 5-phosphate isomerase family. In terms of assembly, homodimer.

The catalysed reaction is aldehydo-D-ribose 5-phosphate = D-ribulose 5-phosphate. It functions in the pathway carbohydrate degradation; pentose phosphate pathway; D-ribose 5-phosphate from D-ribulose 5-phosphate (non-oxidative stage): step 1/1. In terms of biological role, catalyzes the reversible conversion of ribose-5-phosphate to ribulose 5-phosphate. In Korarchaeum cryptofilum (strain OPF8), this protein is Ribose-5-phosphate isomerase A.